A 101-amino-acid chain; its full sequence is Large ribosomal subunit protein uL24 (101 aa).

This sequence belongs to the universal ribosomal protein uL24 family. As to quaternary structure, part of the 50S ribosomal subunit.

Its function is as follows. One of two assembly initiator proteins, it binds directly to the 5'-end of the 23S rRNA, where it nucleates assembly of the 50S subunit. One of the proteins that surrounds the polypeptide exit tunnel on the outside of the subunit. The sequence is that of Large ribosomal subunit protein uL24 from Borrelia garinii subsp. bavariensis (strain ATCC BAA-2496 / DSM 23469 / PBi) (Borreliella bavariensis).